We begin with the raw amino-acid sequence, 134 residues long: Large ribosomal subunit protein uL18 (134 aa).

Belongs to the universal ribosomal protein uL18 family. Part of the 50S ribosomal subunit; part of the 5S rRNA/L5/L18/L25 subcomplex. Contacts the 5S and 23S rRNAs.

Functionally, this is one of the proteins that bind and probably mediate the attachment of the 5S RNA into the large ribosomal subunit, where it forms part of the central protuberance. The protein is Large ribosomal subunit protein uL18 of Corynebacterium efficiens (strain DSM 44549 / YS-314 / AJ 12310 / JCM 11189 / NBRC 100395).